Reading from the N-terminus, the 326-residue chain is tRNA(Ile)-lysidine synthase (326 aa).

Position 23-28 (23-28) interacts with ATP; the sequence is SGGVDS.

Belongs to the tRNA(Ile)-lysidine synthase family.

It is found in the cytoplasm. It carries out the reaction cytidine(34) in tRNA(Ile2) + L-lysine + ATP = lysidine(34) in tRNA(Ile2) + AMP + diphosphate + H(+). Functionally, ligates lysine onto the cytidine present at position 34 of the AUA codon-specific tRNA(Ile) that contains the anticodon CAU, in an ATP-dependent manner. Cytidine is converted to lysidine, thus changing the amino acid specificity of the tRNA from methionine to isoleucine. The protein is tRNA(Ile)-lysidine synthase of Wolinella succinogenes (strain ATCC 29543 / DSM 1740 / CCUG 13145 / JCM 31913 / LMG 7466 / NCTC 11488 / FDC 602W) (Vibrio succinogenes).